Reading from the N-terminus, the 139-residue chain is Transcription antitermination protein NusB (139 aa).

Belongs to the NusB family.

In terms of biological role, involved in transcription antitermination. Required for transcription of ribosomal RNA (rRNA) genes. Binds specifically to the boxA antiterminator sequence of the ribosomal RNA (rrn) operons. The sequence is that of Transcription antitermination protein NusB from Escherichia fergusonii (strain ATCC 35469 / DSM 13698 / CCUG 18766 / IAM 14443 / JCM 21226 / LMG 7866 / NBRC 102419 / NCTC 12128 / CDC 0568-73).